Reading from the N-terminus, the 146-residue chain is uncharacterized protein (146 aa).

The N-terminal stretch at 1 to 26 is a signal peptide; that stretch reads MQFRPSIALVLSIVGILSLEISWTDG.

In terms of tissue distribution, prismatic layer of shell (at protein level). Expressed primarily in the mantle with highest level in the mantle edge and lower level in the mantle pallium.

Its subcellular location is the secreted. This is an uncharacterized protein from Margaritifera margaritifera (Freshwater pearl mussel).